A 613-amino-acid polypeptide reads, in one-letter code: MIQALLVIICLAVFPHQGSSIILESGNVNDYEVVYPQKVPALLKGGVQNPQPETKYEDTMRYEFQVNGEPVVLHLERNKGLFSEDYTETHYAPDGREITTSPPVQDHCYYHGYIQNEADSSAVISACDGLKGHFEHQGETYFIEPLKISNSEAHAIYKDENVENEDETPEICGVTETTWESDESIEKTSQLTNTPEQDRYLQAKKYIEFYVVVDNIMYRHYKRDQPVIKRKVYEMINTMNMIYRRLNFHIALIGLEIWSNINEINVQSDVRATLNLFGEWREKKLLPRKRNDNAQLLTGIDFNGTPVGLAYIGSICNPKTSAAVVQDYSSRTRMVAITMAHEMGHNLGMNHDRGFCTCGFNKCVMSTRRTKPAYQFSSCSVREHQRYLLRDRPQCILNKPLSTDIVSPPICGNYFVEVGEECDCGSPADCQSACCNATTCKLQHEAQCDSEECCEKCKFKGARAECRAAKDDCDLPELCTGQSAECPTDVFQRNGLPCQNNQGYCYNGKCPIMTNQCIALRGPGVKVSRDSCFTLNQRTRGCGLCRMEYGRKIPCAAKDVKCGRLFCKRRNSMICNCSISPRDPNYGMVEPGTKCGDGMVCSNRQCVDVKTAY.

Positions 1–20 (MIQALLVIICLAVFPHQGSS) are cleaved as a signal peptide. The propeptide occupies 21-191 (IILESGNVND…DESIEKTSQL (171 aa)). The region spanning 205 to 400 (KYIEFYVVVD…DRPQCILNKP (196 aa)) is the Peptidase M12B domain. Residues Glu-208 and Asp-292 each contribute to the Ca(2+) site. 2 disulfides stabilise this stretch: Cys-316/Cys-395 and Cys-356/Cys-379. His-341, His-345, and His-351 together coordinate Zn(2+). Ca(2+)-binding residues include Cys-395, Asn-398, Ile-410, Asn-413, Phe-415, Glu-417, Glu-420, and Asp-423. The Disintegrin domain occupies 408-494 (PPICGNYFVE…ECPTDVFQRN (87 aa)). 15 disulfides stabilise this stretch: Cys-411/Cys-440, Cys-422/Cys-435, Cys-424/Cys-430, Cys-434/Cys-457, Cys-448/Cys-454, Cys-453/Cys-479, Cys-466/Cys-486, Cys-473/Cys-505, Cys-498/Cys-510, Cys-517/Cys-567, Cys-532/Cys-575, Cys-542/Cys-577, Cys-545/Cys-555, Cys-562/Cys-601, and Cys-595/Cys-606. N-linked (GlcNAc...) asparagine glycosylation occurs at Asn-436. The D/ECD-tripeptide signature appears at 472–474 (DCD). The Ca(2+) site is built by Asp-474, Leu-475, Glu-477, Asp-489, and Val-490. Residues 560–574 (VKCGRLFCKRRNSMI) form a hypervariable region that may play important roles toward cell migration region.

It belongs to the venom metalloproteinase (M12B) family. P-III subfamily. P-IIIa sub-subfamily. As to quaternary structure, monomer. It depends on Zn(2+) as a cofactor. In terms of tissue distribution, expressed by the venom gland.

It is found in the secreted. Snake venom zinc metalloproteinase that seems to inhibit cell migration. This activity is dominated by the local structure of the hyper-variable region. This chain is Zinc metalloproteinase-disintegrin-like atragin, found in Naja atra (Chinese cobra).